The sequence spans 333 residues: Eukaryotic translation initiation factor 2 subunit 2 (333 aa).

Disordered regions lie at residues 1-120 and 139-165; these read MSGD…LDIM and ILEK…QTGP. Ser-2 carries the post-translational modification N-acetylserine. Ser-2 carries the phosphoserine modification. Phosphoserine; by PKC; in vitro is present on Ser-13. Basic residues predominate over residues 13 to 22; sequence SKKKKKKKKP. Thr-36 is subject to Phosphothreonine. Over residues 40 to 51 the composition is skewed to basic and acidic residues; that stretch reads ETKEVEPEPTED. Ser-67 carries the post-translational modification Phosphoserine; by CK2. Residues 96-105 are compositionally biased toward basic and acidic residues; it reads EGVKDLKIEN. Lys-102 is covalently cross-linked (Glycyl lysine isopeptide (Lys-Gly) (interchain with G-Cter in SUMO2)). Composition is skewed to acidic residues over residues 106–118 and 139–149; these read DVQE…DDLD and ILEKDEALEDE. Ser-158 is subject to Phosphoserine. Ser-218 carries the post-translational modification Phosphoserine; by PKA; in vitro. N6-acetyllysine is present on residues Lys-265 and Lys-293. A C4-type zinc finger spans residues 281 to 305; sequence CHTCRSPDTILQKDTRLYFLQCETC.

It belongs to the eIF-2-beta/eIF-5 family. In terms of assembly, eukaryotic translation initiation factor 2 eIF2 is a heterotrimeric complex composed of an alpha (EIF2S1), a beta (EIF2S2) and a gamma (EIF2S3) chain. eIF2 is member of the 43S pre-initiation complex (43S PIC). eIF2 forms a complex with at least CELF1/CUGBP1, CALR, CALR3, EIF2S1, EIF2S2, HSP90B1 and HSPA5. Interacts with BZW2/5MP1. Interacts with EIF5. In terms of processing, the N-terminus is blocked.

The protein resides in the cytoplasm. The protein localises to the cytosol. Component of the eIF2 complex that functions in the early steps of protein synthesis by forming a ternary complex with GTP and initiator tRNA. This complex binds to a 40S ribosomal subunit, followed by mRNA binding to form the 43S pre-initiation complex (43S PIC). Junction of the 60S ribosomal subunit to form the 80S initiation complex is preceded by hydrolysis of the GTP bound to eIF2 and release of an eIF2-GDP binary complex. In order for eIF2 to recycle and catalyze another round of initiation, the GDP bound to eIF2 must exchange with GTP by way of a reaction catalyzed by eIF2B. This Oryctolagus cuniculus (Rabbit) protein is Eukaryotic translation initiation factor 2 subunit 2 (EIF2S2).